Reading from the N-terminus, the 83-residue chain is Small ribosomal subunit protein uS17 (83 aa).

It belongs to the universal ribosomal protein uS17 family. In terms of assembly, part of the 30S ribosomal subunit.

In terms of biological role, one of the primary rRNA binding proteins, it binds specifically to the 5'-end of 16S ribosomal RNA. This Gloeobacter violaceus (strain ATCC 29082 / PCC 7421) protein is Small ribosomal subunit protein uS17.